A 234-amino-acid polypeptide reads, in one-letter code: UPF0173 metal-dependent hydrolase RHE_CH01853 (234 aa).

The protein belongs to the UPF0173 family.

The polypeptide is UPF0173 metal-dependent hydrolase RHE_CH01853 (Rhizobium etli (strain ATCC 51251 / DSM 11541 / JCM 21823 / NBRC 15573 / CFN 42)).